A 184-amino-acid chain; its full sequence is UPF0397 protein SAB2561c (184 aa).

5 helical membrane passes run 11–31 (VVAIGIGAAVFVILGRFVVIP), 44–64 (AFLALISAIFGPFAGLMTGLV), 77–97 (AWWSWVICSGIIGCLYGWIGL), 111–131 (MIYFNIGQIIANIICWALIAP), and 148–168 (QGVISAVLNIISVGIIGTILL).

This sequence belongs to the UPF0397 family.

The protein localises to the cell membrane. In Staphylococcus aureus (strain bovine RF122 / ET3-1), this protein is UPF0397 protein SAB2561c.